Reading from the N-terminus, the 321-residue chain is Reticulon-2 (321 aa).

Disordered stretches follow at residues 1–36 and 65–85; these read MGHVLSFTHCKDAPSTASSTPDSCPPEGEEDDSPVT and PPVRARRGLGQSRVHAAPREE. Positions 134-321 constitute a Reticulon domain; sequence VKDLLYWRDI…TVKKPPAKQK (188 aa). Helical transmembrane passes span 163–183 and 250–270; these read FSVISVFAYGCLIILSVTLTL and FLVIIYLLTYVGAVFNGITVL.

It localises to the endoplasmic reticulum membrane. It is found in the sarcoplasmic reticulum membrane. The protein resides in the cell membrane. Its subcellular location is the sarcolemma. The protein localises to the T-tubule. It localises to the cytoplasm. It is found in the myofibril. The protein resides in the sarcomere. Its subcellular location is the z line. The protein localises to the cytoskeleton. In terms of biological role, inhibits amyloid precursor protein processing, probably by blocking BACE1 activity. Enhances trafficking of the glutamate transporter SLC1A1/EAAC1 from the endoplasmic reticulum to the cell surface. Plays a role in the translocation of SLC2A4/GLUT4 from intracellular membranes to the cell membrane which facilitates the uptake of glucose into the cell. This Xenopus tropicalis (Western clawed frog) protein is Reticulon-2.